A 483-amino-acid polypeptide reads, in one-letter code: Zinc metalloproteinase/disintegrin (483 aa).

Positions 1-20 (MIQVLLVTLCLAAFPYQGNS) are cleaved as a signal peptide. Positions 21–191 (IILESGNVND…KASQLNLTPE (171 aa)) are excised as a propeptide. The region spanning 198–394 (RYIELVVVAD…HNPQCMLNEP (197 aa)) is the Peptidase M12B domain. Ca(2+) is bound by residues Glu201 and Asp285. Disulfide bonds link Cys309–Cys389, Cys349–Cys373, and Cys351–Cys356. His334 contributes to the Zn(2+) binding site. Glu335 is a catalytic residue. Residues His338 and His344 each contribute to the Zn(2+) site. Ca(2+) contacts are provided by Cys389 and Asn392. The propeptide occupies 395-414 (LRTDIVSTPVSGNELWETGE). Positions 402–483 (TPVSGNELWE…AGCPRNPFHA (82 aa)) constitute a Disintegrin domain. 4 disulfide bridges follow: Cys425-Cys448, Cys439-Cys445, Cys444-Cys469, and Cys457-Cys476. A Cell attachment site; atypical (KGD) motif is present at residues 461 to 463 (KGD).

It belongs to the venom metalloproteinase (M12B) family. P-II subfamily. P-IIe sub-subfamily. Heterodimer with piscivostatin-alpha; disulfide-linked (disintegrin). It depends on Zn(2+) as a cofactor. As to expression, expressed by the venom gland.

It is found in the secreted. Impairs hemostasis in the envenomed animal. In terms of biological role, inhibits platelet aggregation induced by ADP. Acts by inhibiting fibrinogen interaction with platelet receptors GPIIb/GPIIIa (ITGA2B/ITGB3). Also inhibits platelet aggregate dissociation in human platelet-rich plasma. This is Zinc metalloproteinase/disintegrin from Agkistrodon piscivorus piscivorus (Eastern cottonmouth).